Reading from the N-terminus, the 294-residue chain is Indole-3-glycerol phosphate synthase (294 aa).

It belongs to the TrpC family.

The catalysed reaction is 1-(2-carboxyphenylamino)-1-deoxy-D-ribulose 5-phosphate + H(+) = (1S,2R)-1-C-(indol-3-yl)glycerol 3-phosphate + CO2 + H2O. The protein operates within amino-acid biosynthesis; L-tryptophan biosynthesis; L-tryptophan from chorismate: step 4/5. The protein is Indole-3-glycerol phosphate synthase of Synechococcus sp. (strain RCC307).